A 121-amino-acid polypeptide reads, in one-letter code: Large ribosomal subunit protein bL12 (121 aa).

Belongs to the bacterial ribosomal protein bL12 family. Homodimer. Part of the ribosomal stalk of the 50S ribosomal subunit. Forms a multimeric L10(L12)X complex, where L10 forms an elongated spine to which 2 to 4 L12 dimers bind in a sequential fashion. Binds GTP-bound translation factors.

Forms part of the ribosomal stalk which helps the ribosome interact with GTP-bound translation factors. Is thus essential for accurate translation. The chain is Large ribosomal subunit protein bL12 from Pseudomonas fluorescens (strain ATCC BAA-477 / NRRL B-23932 / Pf-5).